We begin with the raw amino-acid sequence, 356 residues long: GDSL esterase/lipase At2g36325 (356 aa).

A signal peptide spans 1-26; it reads MNITKLTPWFLFSCLILLSDYIKVNS. Asparagine 25 carries an N-linked (GlcNAc...) asparagine glycan. Serine 54 serves as the catalytic Nucleophile. N-linked (GlcNAc...) asparagine glycans are attached at residues asparagine 165, asparagine 185, and asparagine 240. Catalysis depends on residues aspartate 334 and histidine 337.

The protein belongs to the 'GDSL' lipolytic enzyme family.

It localises to the secreted. The sequence is that of GDSL esterase/lipase At2g36325 from Arabidopsis thaliana (Mouse-ear cress).